The sequence spans 50 residues: Insulin (50 aa).

Disulfide bonds link C7/C36, C19/C49, and C35/C40.

Belongs to the insulin family. As to quaternary structure, heterodimer of a B chain and an A chain linked by two disulfide bonds.

Its subcellular location is the secreted. In terms of biological role, insulin decreases blood glucose concentration. It increases cell permeability to monosaccharides, amino acids and fatty acids. It accelerates glycolysis, the pentose phosphate cycle, and glycogen synthesis in liver. The polypeptide is Insulin (ins) (Katsuwonus pelamis (Skipjack tuna)).